Reading from the N-terminus, the 321-residue chain is D-alanine--D-alanine ligase (321 aa).

The region spanning 121–315 (RIWFLTNNIN…FTNLIEEIIK (195 aa)) is the ATP-grasp domain. Residue 147 to 199 (PMKRPYVIKPLTQGSSIGVEVIFAEDDFNFADYDFPYGDQVIIEQYIKGRELQ) participates in ATP binding. Residues glutamate 268, glutamate 282, and asparagine 284 each contribute to the Mg(2+) site.

The protein belongs to the D-alanine--D-alanine ligase family. It depends on Mg(2+) as a cofactor. Requires Mn(2+) as cofactor.

It localises to the cytoplasm. The enzyme catalyses 2 D-alanine + ATP = D-alanyl-D-alanine + ADP + phosphate + H(+). It participates in cell wall biogenesis; peptidoglycan biosynthesis. Cell wall formation. This chain is D-alanine--D-alanine ligase, found in Rickettsia rickettsii (strain Iowa).